The sequence spans 69 residues: Protein transport protein Sec61 subunit gamma (69 aa).

Over 1-40 (MDILEETAAPLKDFAKNSIRLFKKCTKPDAQEFQKIALAT) the chain is Cytoplasmic. Residues 41 to 61 (LIGFAIMGFIGFFVKLIHIPI) traverse the membrane as a helical segment. The Extracellular segment spans residues 62-69 (NNILVGGV).

Belongs to the SecE/SEC61-gamma family. As to quaternary structure, heterotrimeric complex composed of SEC61-alpha, SEC61-beta and SEC61-gamma.

It is found in the endoplasmic reticulum membrane. In terms of biological role, necessary for protein translocation in the endoplasmic reticulum. In Dictyostelium discoideum (Social amoeba), this protein is Protein transport protein Sec61 subunit gamma (sec61g).